Here is a 102-residue protein sequence, read N- to C-terminus: Large ribosomal subunit protein uL24 (102 aa).

Belongs to the universal ribosomal protein uL24 family. In terms of assembly, part of the 50S ribosomal subunit.

In terms of biological role, one of two assembly initiator proteins, it binds directly to the 5'-end of the 23S rRNA, where it nucleates assembly of the 50S subunit. Its function is as follows. One of the proteins that surrounds the polypeptide exit tunnel on the outside of the subunit. The chain is Large ribosomal subunit protein uL24 from Ralstonia nicotianae (strain ATCC BAA-1114 / GMI1000) (Ralstonia solanacearum).